Consider the following 382-residue polypeptide: Na(+)/H(+) antiporter NhaA 2 (382 aa).

The next 11 membrane-spanning stretches (helical) occupy residues 7 to 27, 58 to 78, 94 to 114, 124 to 144, 153 to 173, 178 to 198, 199 to 219, 255 to 275, 291 to 311, 327 to 347, and 361 to 381; these read MVLSETFPGILLIFFTFLALL, LDLWINDGLIAIFFLCIGLEL, SLPIFGALGGMITPALIFIAI, GWAIPTATDIAFAVGILMLLG, LFLLSLAIFDDLGAIVIIALF, LSALAIIICLFCIFALLLLNY, YHITHLSLYVLVGVVLWIAML, NPWVVYFILPLFAFANAGIDI, IILGLFLGKQLGVFTFCFIAI, FYGICILTGIGFTMSLFIDGL, and LAILVASFLSAIVGFIYLKIV.

The protein belongs to the NhaA Na(+)/H(+) (TC 2.A.33) antiporter family.

The protein localises to the cell inner membrane. The catalysed reaction is Na(+)(in) + 2 H(+)(out) = Na(+)(out) + 2 H(+)(in). In terms of biological role, na(+)/H(+) antiporter that extrudes sodium in exchange for external protons. The polypeptide is Na(+)/H(+) antiporter NhaA 2 (Campylobacter jejuni (strain RM1221)).